Reading from the N-terminus, the 412-residue chain is Tryptophan synthase beta chain 1 (412 aa).

Position 103 is an N6-(pyridoxal phosphate)lysine (lysine 103).

Belongs to the TrpB family. As to quaternary structure, tetramer of two alpha and two beta chains. The cofactor is pyridoxal 5'-phosphate.

It catalyses the reaction (1S,2R)-1-C-(indol-3-yl)glycerol 3-phosphate + L-serine = D-glyceraldehyde 3-phosphate + L-tryptophan + H2O. It participates in amino-acid biosynthesis; L-tryptophan biosynthesis; L-tryptophan from chorismate: step 5/5. The beta subunit is responsible for the synthesis of L-tryptophan from indole and L-serine. The polypeptide is Tryptophan synthase beta chain 1 (trpB1) (Chlamydia caviae (strain ATCC VR-813 / DSM 19441 / 03DC25 / GPIC) (Chlamydophila caviae)).